Here is a 1607-residue protein sequence, read N- to C-terminus: Thrombospondin type-1 domain-containing protein 7B (1607 aa).

The signal sequence occupies residues 1 to 31 (MFLRSDLAVTHWVSRSMRKLFLVLSLLLSQA). Over 32-1556 (AHLEGRKDNQ…QPLDPDGRVK (1525 aa)) the chain is Extracellular. TSP type-1 domains follow at residues 40–98 (NQFL…RVCD), 102–177 (DLFQ…IPCP), 179–233 (DCVV…VSCP), 336–392 (DCET…IAEG), 399–482 (PRYS…VPCS), 484–543 (DCIV…PMCH), 601–661 (DCVV…HSCT), 662–735 (QLYW…LPCK), 737–796 (DCLV…SLCP), 797–869 (SYRW…IPCR), 871–924 (DCTF…CPCD), 925–999 (TFMS…IPCP), 1001–1126 (DCKL…LLCP), 1128–1182 (ECVM…ENCF), 1183–1246 (QFQY…VECV), 1248–1303 (NCQL…TPCY), 1304–1369 (SWVL…VPCP), and 1371–1432 (DCHI…GKCY). N-linked (GlcNAc...) asparagine glycosylation is found at Asn150 and Asn219. 3 cysteine pairs are disulfide-bonded: Cys411–Cys477, Cys431–Cys481, and Cys442–Cys466. Disulfide bonds link Cys602-Cys643, Cys613-Cys617, and Cys655-Cys660. Asn683 carries N-linked (GlcNAc...) asparagine glycosylation. Disulfide bonds link Cys738-Cys779, Cys749-Cys753, and Cys789-Cys795. A glycan (N-linked (GlcNAc...) asparagine) is linked at Asn757. An N-linked (GlcNAc...) asparagine glycan is attached at Asn842. Asn933 is a glycosylation site (N-linked (GlcNAc...) asparagine). 5 cysteine pairs are disulfide-bonded: Cys937–Cys994, Cys960–Cys998, Cys971–Cys984, Cys1002–Cys1039, and Cys1013–Cys1017. Asn985 carries an N-linked (GlcNAc...) asparagine glycan. Asn1105 carries N-linked (GlcNAc...) asparagine glycosylation. Cysteines 1121 and 1125 form a disulfide. Asn1187 and Asn1199 each carry an N-linked (GlcNAc...) asparagine glycan. 3 disulfide bridges follow: Cys1249–Cys1287, Cys1260–Cys1264, and Cys1297–Cys1302. Residues Asn1309 and Asn1335 are each glycosylated (N-linked (GlcNAc...) asparagine). Cystine bridges form between Cys1372–Cys1416, Cys1383–Cys1387, and Cys1426–Cys1431. N-linked (GlcNAc...) asparagine glycosylation is found at Asn1457 and Asn1525. Residues 1557 to 1577 (MWVYGVSGGSFLIMIFLVFTS) form a helical membrane-spanning segment. The Cytoplasmic portion of the chain corresponds to 1578–1607 (YLVCKKPKPHQSTPRHQKPLTLAYDGDLDM).

The protein resides in the membrane. This chain is Thrombospondin type-1 domain-containing protein 7B, found in Mus musculus (Mouse).